The following is an 89-amino-acid chain: Sec-independent protein translocase protein TatA (89 aa).

Residues 1-21 (MGGISIWQLLIIALIVVLLFG) form a helical membrane-spanning segment. The span at 47–61 (EEKKALEENATDKPA) shows a compositional bias: basic and acidic residues. Positions 47 to 89 (EEKKALEENATDKPAADTAKVTETAKVAETAEKKAESKGKEQA) are disordered. The span at 62-74 (ADTAKVTETAKVA) shows a compositional bias: low complexity. Positions 75–89 (ETAEKKAESKGKEQA) are enriched in basic and acidic residues.

This sequence belongs to the TatA/E family. In terms of assembly, the Tat system comprises two distinct complexes: a TatABC complex, containing multiple copies of TatA, TatB and TatC subunits, and a separate TatA complex, containing only TatA subunits. Substrates initially bind to the TatABC complex, which probably triggers association of the separate TatA complex to form the active translocon.

It is found in the cell inner membrane. Part of the twin-arginine translocation (Tat) system that transports large folded proteins containing a characteristic twin-arginine motif in their signal peptide across membranes. TatA could form the protein-conducting channel of the Tat system. The sequence is that of Sec-independent protein translocase protein TatA from Shewanella pealeana (strain ATCC 700345 / ANG-SQ1).